Here is an 883-residue protein sequence, read N- to C-terminus: MKIKIINNDFPVAKIGLDRITTLVSAKVHNCIYRPRLSIADGTAPRVCLYRAPPGYGKTVALAFEWLRHRTTGRPAVWISLRASSYSEFDICAEIIEQLEAFELVTFSHVREGVSKPTLLRDLASSLWQSTSSNEIETLICLDNINQGLGLPLLHALMEFMLETPKSIRFAVAGNTIKGFSRLKLAGAMQEHTEKDLAFSADEAVALVEAEAVLGVSEVQIEALVQEMEGWPVLIGFLLKCELPAKSISTVVEIDNYFNDEIFEALPERYRVFLVNSSLLDVVTPDGYNYVFKCVNAASCIKYLSTNYMLLRHVEGEPAQFTLHPVLRDFLQGIAWAENPAKRSYLLKRAAFWHWRRGEYQYAIRIALRANDCRWAVGMSEGIILDLSFRQGEIDTLRHWLSELPVKDLHKNPIVLICFAWVLYFSQQSARAEKLLKDLITPPDKKNKWQEKGWPQLVFAIGKATNDEMLLSEELCNKWISLFGDSNAVGKGAALTCLAFIFASEYRFAELEKVLAQAQAVNKFAKQDFAFGWLYVAKLQQALASGKMSWARQLITQARTDSGAQIMETAFTSKMLDALELESNYELCRLDTSEEKFSEILEFIANHGVTDVFFSVCRVVSAWRLGRNDLNGSIEILEWAKAYAAEKNLPRLEVMSQIEIYQRLLFQGVTYINTLQAFEDRKIFSGPHSAPLKARLLLVQSLALSRDQNFHLAAHRALLAIQQARKISAGQLEVRGLLYLAGAQAGGGTLKKAQHNIAYALEMAKQLQCFQTVLDEIRLIKRLIPTSCEVFAAVNLDQAIGAFSLPQMVEIRKSAENKAGDFLTLKQVSVLKLVKEGCSNKQIATKMYVTEDAIKWHMRKIFTILNVKSRTQAIIEAERQGVI.

The HTH luxR-type domain occupies 816–881 (ENKAGDFLTL…QAIIEAERQG (66 aa)). The H-T-H motif DNA-binding region spans 840-859 (NKQIATKMYVTEDAIKWHMR).

It functions in the pathway hydrocarbon metabolism; alkane degradation. Functionally, may act as a transcriptional regulator of AlkB. This is HTH-type transcriptional regulator AlkS (alkS) from Pseudomonas putida (Arthrobacter siderocapsulatus).